Consider the following 404-residue polypeptide: UPF0674 endoplasmic reticulum membrane protein YNR021W (404 aa).

Ser2 bears the N-acetylserine mark. The N-linked (GlcNAc...) asparagine glycan is linked to Asn44. A helical membrane pass occupies residues 49 to 68; sequence LCALGVLFLVYAFYKFGNSV. Residue Asn98 is glycosylated (N-linked (GlcNAc...) asparagine). A disordered region spans residues 369–404; that stretch reads AKRRQLKASGQQEKVDQKMKEKRERRLKNKQRTRFQ. Basic and acidic residues predominate over residues 381 to 392; that stretch reads EKVDQKMKEKRE. A compositionally biased stretch (basic residues) spans 393–404; that stretch reads RRLKNKQRTRFQ.

Belongs to the UPF0674 family.

It localises to the endoplasmic reticulum membrane. This Saccharomyces cerevisiae (strain ATCC 204508 / S288c) (Baker's yeast) protein is UPF0674 endoplasmic reticulum membrane protein YNR021W.